Consider the following 60-residue polypeptide: UPF0434 protein PM0859 (60 aa).

It belongs to the UPF0434 family.

This chain is UPF0434 protein PM0859, found in Pasteurella multocida (strain Pm70).